Here is a 748-residue protein sequence, read N- to C-terminus: LPS-assembly protein LptD (748 aa).

A signal peptide spans 1 to 19; the sequence is MSKTWGILMLSVLSAPSLA.

Belongs to the LptD family. In terms of assembly, component of the lipopolysaccharide transport and assembly complex. Interacts with LptE and LptA.

The protein localises to the cell outer membrane. Functionally, together with LptE, is involved in the assembly of lipopolysaccharide (LPS) at the surface of the outer membrane. The protein is LPS-assembly protein LptD of Pseudoalteromonas translucida (strain TAC 125).